A 191-amino-acid chain; its full sequence is uncharacterized protein (191 aa).

Residues 6 to 66 (GLTQKMIVDA…ELAVRGLTKL (61 aa)) enclose the HTH tetR-type domain. The H-T-H motif DNA-binding region spans 29–48 (SLAALSKKMNVRPPSLYNHI).

This is an uncharacterized protein from Bacillus subtilis (strain 168).